The chain runs to 410 residues: Cysteine desulfurase IscS (410 aa).

Residues 80 to 81 (AT), Asn-160, Gln-188, and 208 to 210 (SGH) each bind pyridoxal 5'-phosphate. N6-(pyridoxal phosphate)lysine is present on Lys-211. Thr-248 contributes to the pyridoxal 5'-phosphate binding site. The active-site Cysteine persulfide intermediate is Cys-334. Cys-334 serves as a coordination point for [2Fe-2S] cluster.

It belongs to the class-V pyridoxal-phosphate-dependent aminotransferase family. NifS/IscS subfamily. Homodimer. Forms a heterotetramer with IscU, interacts with other sulfur acceptors. The cofactor is pyridoxal 5'-phosphate.

It is found in the cytoplasm. The catalysed reaction is (sulfur carrier)-H + L-cysteine = (sulfur carrier)-SH + L-alanine. The protein operates within cofactor biosynthesis; iron-sulfur cluster biosynthesis. Master enzyme that delivers sulfur to a number of partners involved in Fe-S cluster assembly, tRNA modification or cofactor biosynthesis. Catalyzes the removal of elemental sulfur atoms from cysteine to produce alanine. Functions as a sulfur delivery protein for Fe-S cluster synthesis onto IscU, an Fe-S scaffold assembly protein, as well as other S acceptor proteins. In Rickettsia prowazekii (strain Madrid E), this protein is Cysteine desulfurase IscS.